The chain runs to 360 residues: ASTRA-associated protein 1 (360 aa).

WD repeat units lie at residues 9-46 (AHAA…PAAR), 49-86 (AHEG…NSKG), 167-205 (RGEG…CRML), and 317-357 (PEQS…ENGL).

The protein belongs to the WD repeat ASA1 family. As to quaternary structure, component of the ASTRA chromatin remodeling machinery complex.

It is found in the nucleus. In terms of biological role, component of the ASTRA complex involved in chromatin remodeling. In Clavispora lusitaniae (strain ATCC 42720) (Yeast), this protein is ASTRA-associated protein 1 (ASA1).